The primary structure comprises 373 residues: Flap endonuclease 1 (373 aa).

The N-domain stretch occupies residues 1 to 105 (MGIKGLNALI…GELEKRLKRR (105 aa)). Mg(2+) is bound at residue aspartate 34. Positions 47 and 71 each coordinate DNA. Residues aspartate 87, glutamate 159, glutamate 161, aspartate 180, and aspartate 182 each contribute to the Mg(2+) site. Positions 123–254 (DIAKFERRTV…VTAFKLIKEH (132 aa)) are I-domain. DNA is bound at residue glutamate 159. Positions 232 and 234 each coordinate DNA. Residue aspartate 234 participates in Mg(2+) binding. Residues 340-348 (TQGRLDKFF) form an interaction with PCNA region. Positions 347–373 (FFVVKKRPAEEKKGKNTKEEKPKKKRK) are disordered.

The protein belongs to the XPG/RAD2 endonuclease family. FEN1 subfamily. In terms of assembly, interacts with PCNA. Three molecules of FEN1 bind to one PCNA trimer with each molecule binding to one PCNA monomer. PCNA stimulates the nuclease activity without altering cleavage specificity. Requires Mg(2+) as cofactor. In terms of processing, phosphorylated. Phosphorylation upon DNA damage induces relocalization to the nuclear plasma.

It is found in the nucleus. It localises to the nucleolus. Its subcellular location is the nucleoplasm. The protein localises to the mitochondrion. Its function is as follows. Structure-specific nuclease with 5'-flap endonuclease and 5'-3' exonuclease activities involved in DNA replication and repair. During DNA replication, cleaves the 5'-overhanging flap structure that is generated by displacement synthesis when DNA polymerase encounters the 5'-end of a downstream Okazaki fragment. It enters the flap from the 5'-end and then tracks to cleave the flap base, leaving a nick for ligation. Also involved in the long patch base excision repair (LP-BER) pathway, by cleaving within the apurinic/apyrimidinic (AP) site-terminated flap. Acts as a genome stabilization factor that prevents flaps from equilibrating into structures that lead to duplications and deletions. Also possesses 5'-3' exonuclease activity on nicked or gapped double-stranded DNA, and exhibits RNase H activity. Also involved in replication and repair of rDNA and in repairing mitochondrial DNA. This chain is Flap endonuclease 1, found in Komagataella phaffii (strain GS115 / ATCC 20864) (Yeast).